Here is a 327-residue protein sequence, read N- to C-terminus: Beta-ketoacyl-[acyl-carrier-protein] synthase III (327 aa).

Residues C112 and H253 contribute to the active site. An ACP-binding region spans residues 254–258 (QANER). The active site involves N283.

It belongs to the thiolase-like superfamily. FabH family. Homodimer.

The protein resides in the cytoplasm. The catalysed reaction is malonyl-[ACP] + acetyl-CoA + H(+) = 3-oxobutanoyl-[ACP] + CO2 + CoA. Its pathway is lipid metabolism; fatty acid biosynthesis. Its function is as follows. Catalyzes the condensation reaction of fatty acid synthesis by the addition to an acyl acceptor of two carbons from malonyl-ACP. Catalyzes the first condensation reaction which initiates fatty acid synthesis and may therefore play a role in governing the total rate of fatty acid production. Possesses both acetoacetyl-ACP synthase and acetyl transacylase activities. Its substrate specificity determines the biosynthesis of branched-chain and/or straight-chain of fatty acids. This Chlamydia trachomatis serovar A (strain ATCC VR-571B / DSM 19440 / HAR-13) protein is Beta-ketoacyl-[acyl-carrier-protein] synthase III.